A 548-amino-acid chain; its full sequence is Elongator complex protein 3 (548 aa).

Residues 83-373 (RTASGIAVVA…YRVQRDIPMP (291 aa)) enclose the Radical SAM core domain. Residues Cys100, Cys110, and Cys113 each contribute to the [4Fe-4S] cluster site. Residues Lys165, 475 to 478 (ELHV), 498 to 500 (FGM), and Tyr531 each bind acetyl-CoA. The N-acetyltransferase domain occupies 397–548 (TECRDVRTRE…EGPYMVKNLY (152 aa)).

The protein belongs to the ELP3 family. Component of the elongator complex. The cofactor is [4Fe-4S] cluster.

It is found in the cytoplasm. Its subcellular location is the nucleus. It carries out the reaction uridine(34) in tRNA + acetyl-CoA + S-adenosyl-L-methionine + H2O = 5-(carboxymethyl)uridine(34) in tRNA + 5'-deoxyadenosine + L-methionine + CoA + 2 H(+). The protein operates within tRNA modification; 5-methoxycarbonylmethyl-2-thiouridine-tRNA biosynthesis. Functionally, catalytic tRNA acetyltransferase subunit of the elongator complex which is required for multiple tRNA modifications, including mcm5U (5-methoxycarbonylmethyl uridine), mcm5s2U (5-methoxycarbonylmethyl-2-thiouridine), and ncm5U (5-carbamoylmethyl uridine). In the elongator complex, acts as a tRNA uridine(34) acetyltransferase by mediating formation of carboxymethyluridine in the wobble base at position 34 in tRNAs. Involved in neurogenesis. Involved in somite development. This chain is Elongator complex protein 3, found in Danio rerio (Zebrafish).